Here is a 137-residue protein sequence, read N- to C-terminus: Beta-synuclein (137 aa).

2 tandem repeats follow at residues 20 to 30 (EKTKQGVTEAA) and 31 to 41 (EKTKEGVLYVG). Residues 20–67 (EKTKQGVTEAAEKTKEGVLYVGSKTKEGVVQGVASVAEKTKEQASHLG) form a 4 X 11 AA tandem repeats of [EGS]-K-T-K-[EQ]-[GQ]-V-X(4) region. One copy of the 3; approximate repeat lies at 42–56 (SKTKEGVVQGVASVA). The stretch at 57–67 (EKTKEQASHLG) is repeat 4. The span at 88 to 97 (EFPTDLKPEE) shows a compositional bias: basic and acidic residues. The tract at residues 88 to 137 (EFPTDLKPEEVAQEAAEEPLIEPLMEPEGESYEDSPQEEYQEYEPEAKGP) is disordered. Acidic residues predominate over residues 98–131 (VAQEAAEEPLIEPLMEPEGESYEDSPQEEYQEYE). The residue at position 118 (Ser118) is a Phosphoserine; by BARK1, CK2 and GRK5.

This sequence belongs to the synuclein family. In terms of processing, phosphorylated. Phosphorylation by G-protein coupled receptor kinases (GRK) is more efficient than phosphorylation by CK1, CK2 and CaM-kinase II. As to expression, expressed specifically in brain.

The protein localises to the cytoplasm. Its function is as follows. May be involved in neuronal plasticity. The sequence is that of Beta-synuclein (Sncb) from Rattus norvegicus (Rat).